The sequence spans 161 residues: uncharacterized protein (161 aa).

This sequence belongs to the M.jannaschii MJ0150/MJ0739/MJ0745/MJ1460/MJ1642 family.

This is an uncharacterized protein from Methanocaldococcus jannaschii (strain ATCC 43067 / DSM 2661 / JAL-1 / JCM 10045 / NBRC 100440) (Methanococcus jannaschii).